A 455-amino-acid polypeptide reads, in one-letter code: Chromosomal replication initiator protein DnaA (455 aa).

A domain I, interacts with DnaA modulators region spans residues 1–73 (METSLETLWS…RDVVHEILGH (73 aa)). The interval 73–116 (HPVEIQIEIAQGDSNATISAPEVASPPPTASPVENTNTSQRQQA) is domain II. The interval 92–116 (APEVASPPPTASPVENTNTSQRQQA) is disordered. The segment covering 104 to 116 (PVENTNTSQRQQA) has biased composition (polar residues). Residues 117–333 (SLNPKYVFSR…GALIRAVAYI (217 aa)) form a domain III, AAA+ region region. ATP contacts are provided by Gly-161, Gly-163, Lys-164, and Thr-165. The segment at 334 to 455 (SISGLPMNVE…GDRIKLANQP (122 aa)) is domain IV, binds dsDNA.

It belongs to the DnaA family. In terms of assembly, oligomerizes as a right-handed, spiral filament on DNA at oriC.

It is found in the cytoplasm. Its function is as follows. Plays an essential role in the initiation and regulation of chromosomal replication. ATP-DnaA binds to the origin of replication (oriC) to initiate formation of the DNA replication initiation complex once per cell cycle. Binds the DnaA box (a 9 base pair repeat at the origin) and separates the double-stranded (ds)DNA. Forms a right-handed helical filament on oriC DNA; dsDNA binds to the exterior of the filament while single-stranded (ss)DNA is stabiized in the filament's interior. The ATP-DnaA-oriC complex binds and stabilizes one strand of the AT-rich DNA unwinding element (DUE), permitting loading of DNA polymerase. After initiation quickly degrades to an ADP-DnaA complex that is not apt for DNA replication. Binds acidic phospholipids. The chain is Chromosomal replication initiator protein DnaA from Acaryochloris marina (strain MBIC 11017).